Consider the following 130-residue polypeptide: MSFQLRSSARIPSRSCSSFTLLAFLLLFTLPQHRAQAAPFSAMVATELRCVCLTLAPRINPKMIANLEVIPAGPHCPKVEVIAKLKNQKDNVCLDPQAPLIKKVIQKILGSENKKTKRNALALVRSASTQ.

A signal peptide spans Met-1–Ala-37. Cystine bridges form between Cys-50–Cys-76 and Cys-52–Cys-93.

This sequence belongs to the intercrine alpha (chemokine CxC) family. As to quaternary structure, monomer. Homodimer.

The protein resides in the secreted. In terms of biological role, may participate in the recruitment of inflammatory cells by injured or infected tissue. This is C-X-C motif chemokine 5 (Cxcl5) from Rattus norvegicus (Rat).